The sequence spans 122 residues: Large ribosomal subunit protein uL14 (122 aa).

It belongs to the universal ribosomal protein uL14 family. As to quaternary structure, part of the 50S ribosomal subunit. Forms a cluster with proteins L3 and L19. In the 70S ribosome, L14 and L19 interact and together make contacts with the 16S rRNA in bridges B5 and B8.

Its function is as follows. Binds to 23S rRNA. Forms part of two intersubunit bridges in the 70S ribosome. This is Large ribosomal subunit protein uL14 from Streptococcus thermophilus (strain CNRZ 1066).